A 345-amino-acid chain; its full sequence is Histidinol-phosphate aminotransferase (345 aa).

Lys205 carries the post-translational modification N6-(pyridoxal phosphate)lysine.

This sequence belongs to the class-II pyridoxal-phosphate-dependent aminotransferase family. Histidinol-phosphate aminotransferase subfamily. As to quaternary structure, homodimer. The cofactor is pyridoxal 5'-phosphate.

The enzyme catalyses L-histidinol phosphate + 2-oxoglutarate = 3-(imidazol-4-yl)-2-oxopropyl phosphate + L-glutamate. Its pathway is amino-acid biosynthesis; L-histidine biosynthesis; L-histidine from 5-phospho-alpha-D-ribose 1-diphosphate: step 7/9. The chain is Histidinol-phosphate aminotransferase from Parabacteroides distasonis (strain ATCC 8503 / DSM 20701 / CIP 104284 / JCM 5825 / NCTC 11152).